A 317-amino-acid polypeptide reads, in one-letter code: 4-hydroxy-3-methylbut-2-enyl diphosphate reductase (317 aa).

C12 contacts [4Fe-4S] cluster. Positions 41 and 74 each coordinate (2E)-4-hydroxy-3-methylbut-2-enyl diphosphate. Dimethylallyl diphosphate is bound by residues H41 and H74. Positions 41 and 74 each coordinate isopentenyl diphosphate. Residue C97 coordinates [4Fe-4S] cluster. Residue H125 participates in (2E)-4-hydroxy-3-methylbut-2-enyl diphosphate binding. Dimethylallyl diphosphate is bound at residue H125. Position 125 (H125) interacts with isopentenyl diphosphate. E127 functions as the Proton donor in the catalytic mechanism. (2E)-4-hydroxy-3-methylbut-2-enyl diphosphate is bound at residue T168. C198 is a binding site for [4Fe-4S] cluster. 4 residues coordinate (2E)-4-hydroxy-3-methylbut-2-enyl diphosphate: S226, S227, N228, and S270. Dimethylallyl diphosphate is bound by residues S226, S227, N228, and S270. The isopentenyl diphosphate site is built by S226, S227, N228, and S270.

The protein belongs to the IspH family. As to quaternary structure, homodimer. It depends on [4Fe-4S] cluster as a cofactor.

The catalysed reaction is isopentenyl diphosphate + 2 oxidized [2Fe-2S]-[ferredoxin] + H2O = (2E)-4-hydroxy-3-methylbut-2-enyl diphosphate + 2 reduced [2Fe-2S]-[ferredoxin] + 2 H(+). The enzyme catalyses dimethylallyl diphosphate + 2 oxidized [2Fe-2S]-[ferredoxin] + H2O = (2E)-4-hydroxy-3-methylbut-2-enyl diphosphate + 2 reduced [2Fe-2S]-[ferredoxin] + 2 H(+). It functions in the pathway isoprenoid biosynthesis; dimethylallyl diphosphate biosynthesis; dimethylallyl diphosphate from (2E)-4-hydroxy-3-methylbutenyl diphosphate: step 1/1. The protein operates within isoprenoid biosynthesis; isopentenyl diphosphate biosynthesis via DXP pathway; isopentenyl diphosphate from 1-deoxy-D-xylulose 5-phosphate: step 6/6. Catalyzes the conversion of 1-hydroxy-2-methyl-2-(E)-butenyl 4-diphosphate (HMBPP) into a mixture of isopentenyl diphosphate (IPP) and dimethylallyl diphosphate (DMAPP). Acts in the terminal step of the DOXP/MEP pathway for isoprenoid precursor biosynthesis. This chain is 4-hydroxy-3-methylbut-2-enyl diphosphate reductase, found in Yersinia pestis bv. Antiqua (strain Antiqua).